Here is a 106-residue protein sequence, read N- to C-terminus: Cytochrome c oxidase assembly protein COX16 homolog, mitochondrial (106 aa).

Over 1–15 the chain is Mitochondrial matrix; sequence MIAPAVLRALRKNKT. A helical membrane pass occupies residues 16-33; that stretch reads LRYGVPMLLLVVGGSFGL. The Mitochondrial intermembrane portion of the chain corresponds to 34–106; that stretch reads REFSQIRYDA…NPETLKPKTT (73 aa). The tract at residues 81-106 is disordered; it reads IRGPRPWEDPQLLQGRNPETLKPKTT.

It belongs to the COX16 family. In terms of assembly, associates with the MITRAC complex. Interacts with MT-CO2/COX; specifically interacts with newly synthesized MT-CO2/COX. Interacts with SCO1, SCO2 and COA6.

It localises to the mitochondrion inner membrane. Its function is as follows. Required for the assembly of the mitochondrial respiratory chain complex IV (CIV), also known as cytochrome c oxidase. Promotes the insertion of copper into the active site of cytochrome c oxidase subunit II (MT-CO2/COX2). Interacts specifically with newly synthesized MT-CO2/COX and its copper center-forming metallochaperones SCO1, SCO2 and COA6. Probably facilitates MT-CO2/COX2 association with the MITRAC assembly intermediate containing MT-CO1/COX1, thereby participating in merging the MT-CO1/COX1 and MT-CO2/COX2 assembly lines. The sequence is that of Cytochrome c oxidase assembly protein COX16 homolog, mitochondrial from Mus musculus (Mouse).